Consider the following 250-residue polypeptide: Aquaporin TIP2-2 (250 aa).

2 helical membrane-spanning segments follow: residues 22-42 (VAEF…AIAF) and 54-74 (AGLV…VSVA). Positions 83–85 (NPA) match the NPA 1 motif. The next 3 helical transmembrane spans lie at 97-119 (TVLT…CLLL), 142-162 (GVVF…ATAA), and 169-189 (LGTI…LAAG). Residues 197–199 (NPA) carry the NPA 2 motif. A helical membrane pass occupies residues 218-238 (WVGPLIGGGLAGLVYGDVFIG).

It belongs to the MIP/aquaporin (TC 1.A.8) family. TIP (TC 1.A.8.10) subfamily.

Its subcellular location is the vacuole membrane. Its function is as follows. Aquaporins facilitate the transport of water and small neutral solutes across cell membranes. The polypeptide is Aquaporin TIP2-2 (TIP2-2) (Zea mays (Maize)).